We begin with the raw amino-acid sequence, 449 residues long: MEKVNEERDAVFEDHIGDRRRSVRSLLEEAFADEMEKTSYDVEVADTPQPHIPIRFRHPPIAGPVHDVFGDAIHDIFQKMMKRGQAVDFCHWVSHLIATEIDEKFSEVAFRDVQYNPDIYVTDSTTEAKKLFNDKIWPAIDKILQQNAETCPILSEKWSGIHVSGDQLKGQRHKQEDRFLAYPNGQYMDRGEDPISVLAVFDGHGGHECSQYAAGHLWETWLEVRKSRDPSDSLEDQLRKSLELLDERMTVRSVKECWKGGSTAVCCAIDMDQKLMALAWLGDSPGYVMSNIEFRQLTRGHSPSDEREARRVEEAGGQLFVIGGELRVNGVLNLTRALGDVPGRPMISNEPETCQVPIESSDYLVLLACDGISDVFNERDLYQLVEAFANDYPVEDYAELSRFICTKAIEAGSADNVSVVIGFLRPPQDVWKLMKHESDDEDSDVTDEE.

The interval 28–34 is interaction with fem-1 and fem-3; the sequence is EEAFADE. Positions 54–56 are interaction with fem-3; it reads IRF. Residues 160–424 enclose the PPM-type phosphatase domain; that stretch reads GIHVSGDQLK…DNVSVVIGFL (265 aa). Residues Asp-202, Gly-203, Asp-370, and Asp-415 each coordinate Mg(2+).

It belongs to the PP2C family. Component of a complex containing fem-1, fem-2 and fem-3. Interacts (via N-terminus) with fem-1 and fem-3. Component of the CBC(fem-1) E3 ubiquitin-protein ligase complex, at least composed of cul-2, elc-1, tra-1, fem-1, fem-2 and fem-3; mediates the ubiquitination and subsequent proteasomal degradation of tra-1. Interacts with tra-1. Interacts with sel-10. Mg(2+) serves as cofactor. It depends on Mn(2+) as a cofactor.

The enzyme catalyses O-phospho-L-seryl-[protein] + H2O = L-seryl-[protein] + phosphate. It carries out the reaction O-phospho-L-threonyl-[protein] + H2O = L-threonyl-[protein] + phosphate. Dephosphorylates auto-phosphorylated Ca(2+)/calmodulin-dependent protein kinase unc-43/CAMKII in vitro. Involved in the regulation of sex determination. Together with fem-3, required for male sexual development by promoting the proteasomal-mediated degradation of tra-1, a transcription repressor of male-specific genes. Promotes apoptosis. The chain is Protein phosphatase fem-2 from Caenorhabditis elegans.